A 349-amino-acid chain; its full sequence is 4-hydroxy-3-methylbut-2-en-1-yl diphosphate synthase (flavodoxin) (349 aa).

4 residues coordinate [4Fe-4S] cluster: Cys264, Cys267, Cys299, and Glu306.

Belongs to the IspG family. [4Fe-4S] cluster is required as a cofactor.

It catalyses the reaction (2E)-4-hydroxy-3-methylbut-2-enyl diphosphate + oxidized [flavodoxin] + H2O + 2 H(+) = 2-C-methyl-D-erythritol 2,4-cyclic diphosphate + reduced [flavodoxin]. It participates in isoprenoid biosynthesis; isopentenyl diphosphate biosynthesis via DXP pathway; isopentenyl diphosphate from 1-deoxy-D-xylulose 5-phosphate: step 5/6. Functionally, converts 2C-methyl-D-erythritol 2,4-cyclodiphosphate (ME-2,4cPP) into 1-hydroxy-2-methyl-2-(E)-butenyl 4-diphosphate. This Clostridium acetobutylicum (strain ATCC 824 / DSM 792 / JCM 1419 / IAM 19013 / LMG 5710 / NBRC 13948 / NRRL B-527 / VKM B-1787 / 2291 / W) protein is 4-hydroxy-3-methylbut-2-en-1-yl diphosphate synthase (flavodoxin).